The chain runs to 113 residues: MEAWLGSLLFLATMVIASKAVCSIENREIFPNQMSDDCMDADGNKHFLNTPWKKNCTWCSCDKTSITCCTNATRPLSYDKDNCDVQFHPENCTYSVVDRKNPGKTCRVDSWTM.

The first 20 residues, 1-20, serve as a signal peptide directing secretion; it reads MEAWLGSLLFLATMVIASKA. Cystine bridges form between cysteine 22-cysteine 69, cysteine 38-cysteine 61, cysteine 56-cysteine 92, cysteine 59-cysteine 68, and cysteine 83-cysteine 106.

Belongs to the beta-microseminoprotein family. As to quaternary structure, homodimer; Interacts with PI16.

The protein localises to the secreted. The sequence is that of Beta-microseminoprotein (Msmb) from Mus musculus (Mouse).